We begin with the raw amino-acid sequence, 760 residues long: Prolyl endopeptidase FAP (760 aa).

Over 1–4 (MKTW) the chain is Cytoplasmic. A helical; Signal-anchor for type II membrane protein membrane pass occupies residues 5–25 (LKIVFGVATSAVLALLVMCIV). At 26–760 (LRPSRVHNSE…FLKQCFSLSD (735 aa)) the chain is on the extracellular side. Residues asparagine 49, asparagine 92, and asparagine 99 are each glycosylated (N-linked (GlcNAc...) asparagine). Residues glutamate 203 and glutamate 204 each coordinate substrate. N-linked (GlcNAc...) asparagine glycans are attached at residues asparagine 227 and asparagine 314. Disulfide bonds link cysteine 321-cysteine 332, cysteine 438-cysteine 441, and cysteine 448-cysteine 466. Positions 481–512 (TDQEIKILEDNKELENALKNIQLPKEEIKKLK) form a coiled coil. Residue serine 624 is the Charge relay system of the active site. Cysteine 643 and cysteine 755 are disulfide-bonded. Residue asparagine 679 is glycosylated (N-linked (GlcNAc...) asparagine). Active-site charge relay system residues include aspartate 702 and histidine 734.

Belongs to the peptidase S9B family. In terms of assembly, homodimer; homodimerization is required for activity of both plasma membrane and soluble forms. The monomer is inactive. Heterodimer with DPP4. Interacts with PLAUR; the interaction occurs at the cell surface of invadopodia membranes. Interacts with ITGB1. Interacts with ITGA3. Associates with integrin alpha-3/beta-1; the association occurs in a collagen-dependent manner at the cell surface of invadopodia membranes. Post-translationally, N-glycosylated. In terms of processing, the N-terminus may be blocked.

The protein resides in the cell surface. The protein localises to the cell membrane. It is found in the cell projection. Its subcellular location is the lamellipodium membrane. It localises to the invadopodium membrane. The protein resides in the ruffle membrane. The protein localises to the membrane. It is found in the secreted. It catalyses the reaction Release of an N-terminal dipeptide, Xaa-Yaa-|-Zaa-, from a polypeptide, preferentially when Yaa is Pro, provided Zaa is neither Pro nor hydroxyproline.. The catalysed reaction is Hydrolysis of Pro-|-Xaa &gt;&gt; Ala-|-Xaa in oligopeptides.. Its activity is regulated as follows. Gelatinase activity is inhibited by serine-protease inhibitors, such as phenylmethylsulfonyl fluoride (PMSF), 4-(2-aminoethyl)-benzenesulfonyl fluoride hydrochloride (AEBSF), 4-amidino phenylsulfonyl fluoride (APSF) and diisopropyl fluorophosphate (DFP), N-ethylmaleimide (NEM) and phenylmethylsulfonyl fluoride (PMSF). Dipeptidyl peptidase activity is inhibited by 2,2'-azino-bis(3-ethylbenzthiazoline-6-sulfonic acid), diisopropylfluorophosphate (DFP). Prolyl endopeptidase activity is inhibited by the boronic acid peptide Ac-Gly-BoroPro, Ac-Gly-Pro-chloromethyl ketone and Thr-Ser-Gly-chloromethyl ketone. In terms of biological role, cell surface glycoprotein serine protease that participates in extracellular matrix degradation and involved in many cellular processes including tissue remodeling, fibrosis, wound healing, inflammation and tumor growth. Both plasma membrane and soluble forms exhibit post-proline cleaving endopeptidase activity, with a marked preference for Ala/Ser-Gly-Pro-Ser/Asn/Ala consensus sequences, on substrate such as alpha-2-antiplasmin SERPINF2 and SPRY2. Degrade also gelatin, heat-denatured type I collagen, but not native collagen type I and IV, vibronectin, tenascin, laminin, fibronectin, fibrin or casein. Also has dipeptidyl peptidase activity, exhibiting the ability to hydrolyze the prolyl bond two residues from the N-terminus of synthetic dipeptide substrates provided that the penultimate residue is proline, with a preference for Ala-Pro, Ile-Pro, Gly-Pro, Arg-Pro and Pro-Pro. Natural neuropeptide hormones for dipeptidyl peptidase are the neuropeptide Y (NPY), peptide YY (PYY), substance P (TAC1) and brain natriuretic peptide 32 (NPPB). The plasma membrane form, in association with either DPP4, PLAUR or integrins, is involved in the pericellular proteolysis of the extracellular matrix (ECM), and hence promotes cell adhesion, migration and invasion through the ECM. Plays a role in tissue remodeling during development and wound healing. Participates in the cell invasiveness towards the ECM in malignant melanoma cancers. Enhances tumor growth progression by increasing angiogenesis, collagen fiber degradation and apoptosis and by reducing antitumor response of the immune system. Promotes glioma cell invasion through the brain parenchyma by degrading the proteoglycan brevican. Acts as a tumor suppressor in melanocytic cells through regulation of cell proliferation and survival in a serine protease activity-independent manner. The sequence is that of Prolyl endopeptidase FAP from Bos taurus (Bovine).